The primary structure comprises 345 residues: Anthranilate phosphoribosyltransferase (345 aa).

5-phospho-alpha-D-ribose 1-diphosphate is bound by residues Gly-84, 87–88, Thr-92, 94–97, 112–120, and Ser-124; these read GD, NIST, and KHGGRGVSS. Gly-84 is a binding site for anthranilate. Residue Ser-96 participates in Mg(2+) binding. Arg-170 provides a ligand contact to anthranilate. Asp-229 and Glu-230 together coordinate Mg(2+).

This sequence belongs to the anthranilate phosphoribosyltransferase family. In terms of assembly, homodimer. It depends on Mg(2+) as a cofactor.

The enzyme catalyses N-(5-phospho-beta-D-ribosyl)anthranilate + diphosphate = 5-phospho-alpha-D-ribose 1-diphosphate + anthranilate. Its pathway is amino-acid biosynthesis; L-tryptophan biosynthesis; L-tryptophan from chorismate: step 2/5. Catalyzes the transfer of the phosphoribosyl group of 5-phosphorylribose-1-pyrophosphate (PRPP) to anthranilate to yield N-(5'-phosphoribosyl)-anthranilate (PRA). This is Anthranilate phosphoribosyltransferase from Paracidovorax citrulli (strain AAC00-1) (Acidovorax citrulli).